The sequence spans 359 residues: Type-1 angiotensin II receptor (359 aa).

The Extracellular segment spans residues 1 to 25 (MILNSSTEDGIKRIQDDCPKAGRHN). An N-linked (GlcNAc...) (complex) asparagine glycan is attached at Asn-4. Residues Gln-15 and Asp-17 each coordinate angiotensin II. Intrachain disulfides connect Cys-18–Cys-274 and Cys-101–Cys-180. Residues 26 to 55 (YIFVMIPTLYSIIFVVGIFGNSLVVIVIYF) form a helical membrane-spanning segment. The Cytoplasmic segment spans residues 56–61 (YMKLKT). A helical transmembrane segment spans residues 62–89 (VASVFLLNLALADLCFLLTLPLWAVYTA). Topologically, residues 90-98 (MEYRWPFGN) are extracellular. A helical membrane pass occupies residues 99 to 125 (YLCKIASASVSFNLYASVFLLTCLSID). Topologically, residues 126-141 (RYLAIVHPMKSRLRRT) are cytoplasmic. Residues 142 to 165 (MLVAKVTCIIIWLLAGLASLPAII) traverse the membrane as a helical segment. The Extracellular segment spans residues 166-190 (HRNVFFIENTNITVCAFHYESQNST). Arg-167 contacts angiotensin II. Asn-176 carries an N-linked (GlcNAc...) asparagine glycan. Angiotensin II-binding residues include Phe-182, His-183, and Tyr-184. A glycan (N-linked (GlcNAc...) asparagine) is linked at Asn-188. The helical transmembrane segment at 191-216 (LPIGLGLTKNILGFLFPFLIILTSYT) threads the bilayer. Lys-199 provides a ligand contact to angiotensin II. At 217–239 (LIWKALKKAYEIQKNKPRNDDIF) the chain is on the cytoplasmic side. Residues 240–268 (KIIMAIVLFFFFSWIPHQIFTFLDVLIQL) traverse the membrane as a helical segment. Over 269-278 (GIIRDCRIAD) the chain is Extracellular. Residues 279 to 304 (IVDTAMPITICIAYFNNCLNPLFYGF) form a helical membrane-spanning segment. The Cytoplasmic portion of the chain corresponds to 305-359 (LGKKFKRYFLQLLKYIPPKAKSHSNLSTKMSTLSYRPSDNVSSSTKKPAPCFEVE). The span at 335–350 (STLSYRPSDNVSSSTK) shows a compositional bias: polar residues. The interval 335–359 (STLSYRPSDNVSSSTKKPAPCFEVE) is disordered. Cys-355 is lipidated: S-palmitoyl cysteine.

This sequence belongs to the G-protein coupled receptor 1 family. In terms of assembly, interacts with MAS1. Interacts with ARRB1. Interacts with FLNA (via filamin repeat 21); increases PKA-mediated phosphorylation of FLNA. Post-translationally, C-terminal Ser or Thr residues may be phosphorylated. Liver, lung, adrenal and adrenocortical adenomas.

The protein localises to the cell membrane. With respect to regulation, strongly inhibited by anti-hypertensive drugs losartan, candesartan, valsartan, irbesartan, telmisartan, eprosartan, olmesartan and azilsartan, most of which share a common biphenyl-tetrazole scaffold. Its function is as follows. Receptor for angiotensin II, a vasoconstricting peptide, which acts as a key regulator of blood pressure and sodium retention by the kidney. The activated receptor in turn couples to G-alpha proteins G(q) (GNAQ, GNA11, GNA14 or GNA15) and thus activates phospholipase C and increases the cytosolic Ca(2+) concentrations, which in turn triggers cellular responses such as stimulation of protein kinase C. (Microbial infection) During SARS coronavirus-2/SARS-CoV-2 infection, it is able to recognize and internalize the complex formed by secreted ACE2 and SARS-CoV-2 spike protein through DNM2/dynamin 2-dependent endocytosis. This is Type-1 angiotensin II receptor from Homo sapiens (Human).